Here is a 199-residue protein sequence, read N- to C-terminus: NAD(P)H dehydrogenase (quinone) (199 aa).

One can recognise a Flavodoxin-like domain in the interval 4 to 190; it reads ILVLYYSMYG…KIARYQGEHV (187 aa). FMN-binding positions include 10–15 and 79–81; these read SMYGHI and TRF. Residue Tyr12 coordinates NAD(+). Trp99 contacts substrate. His134 is a binding site for FMN.

The protein belongs to the WrbA family. The cofactor is FMN.

The catalysed reaction is a quinone + NADH + H(+) = a quinol + NAD(+). The enzyme catalyses a quinone + NADPH + H(+) = a quinol + NADP(+). This chain is NAD(P)H dehydrogenase (quinone), found in Photorhabdus laumondii subsp. laumondii (strain DSM 15139 / CIP 105565 / TT01) (Photorhabdus luminescens subsp. laumondii).